The primary structure comprises 738 residues: Polyribonucleotide nucleotidyltransferase (738 aa).

2 residues coordinate Mg(2+): aspartate 487 and aspartate 493. Residues 554 to 613 (PKIVTMTINPDKIRDVIGPGGKMINSIIDQTGVKIDIEQDGTVFIASTDQEGIDLAMSMI) form the KH domain. Residues 623–691 (GEVYDATVRR…DKGRVNASRK (69 aa)) form the S1 motif domain. The interval 704 to 738 (EAYEAKRKAARESRPPRDSRPPRRDGDRRPPRSTN) is disordered.

Belongs to the polyribonucleotide nucleotidyltransferase family. It depends on Mg(2+) as a cofactor.

The protein localises to the cytoplasm. It carries out the reaction RNA(n+1) + phosphate = RNA(n) + a ribonucleoside 5'-diphosphate. Its function is as follows. Involved in mRNA degradation. Catalyzes the phosphorolysis of single-stranded polyribonucleotides processively in the 3'- to 5'-direction. This Exiguobacterium sp. (strain ATCC BAA-1283 / AT1b) protein is Polyribonucleotide nucleotidyltransferase.